The following is a 346-amino-acid chain: 36.4 kDa proline-rich protein (346 aa).

Residues 11-144 form a disordered region; the sequence is PYPPSTPKHP…PFTPKPPSPI (134 aa). Pro residues-rich tracts occupy residues 25–42, 51–81, and 89–144; these read KVKP…PSTP, VKPP…PSTP, and QKPC…PSPI.

The polypeptide is 36.4 kDa proline-rich protein (TPRP-F1) (Solanum lycopersicum (Tomato)).